The chain runs to 97 residues: MTDLRHYDVIVSPVITEKSTMVSEHNQVVFNVARKATKPEIKAAVEALFGVKVTAVNTAVCKGKVKRFRGLVGRQSDVKKAIVTLAEGQSIDVSTGL.

It belongs to the universal ribosomal protein uL23 family. In terms of assembly, part of the 50S ribosomal subunit. Contacts protein L29, and trigger factor when it is bound to the ribosome.

Functionally, one of the early assembly proteins it binds 23S rRNA. One of the proteins that surrounds the polypeptide exit tunnel on the outside of the ribosome. Forms the main docking site for trigger factor binding to the ribosome. The sequence is that of Large ribosomal subunit protein uL23 from Brucella melitensis biotype 2 (strain ATCC 23457).